A 537-amino-acid polypeptide reads, in one-letter code: Tegument protein BRRF2 (537 aa).

Disordered stretches follow at residues 322–466 (PRFL…AEEF) and 486–537 (GLRV…LSVV). Positions 334–347 (EPQQTCSQLTSRGN) are enriched in polar residues. The span at 420 to 441 (VTGSSQAAPSSSSVTPVASLSG) shows a compositional bias: low complexity. A compositionally biased stretch (acidic residues) spans 492 to 517 (DEDEDGSEDGEFSDLDLSDSDHEGDE).

This sequence belongs to the lymphocryptovirus BRRF2 family.

The protein localises to the virion tegument. This is Tegument protein BRRF2 from Homo sapiens (Human).